We begin with the raw amino-acid sequence, 131 residues long: MSMSDPIADMLTRIRNAQQVDKVTVSMPSSKLKAAIAAVLQDEGYIDGFEVKGTQAKPELEITLKYYAGRPVIERIERVSRPGLRIYKGRSNIPQVMNGLGVAIVSTSRGVMTDRKARANGVGGEVLCYVA.

The protein belongs to the universal ribosomal protein uS8 family. Part of the 30S ribosomal subunit. Contacts proteins S5 and S12.

One of the primary rRNA binding proteins, it binds directly to 16S rRNA central domain where it helps coordinate assembly of the platform of the 30S subunit. The protein is Small ribosomal subunit protein uS8 of Bordetella petrii (strain ATCC BAA-461 / DSM 12804 / CCUG 43448).